We begin with the raw amino-acid sequence, 204 residues long: MAHQGLLLVLSGPSGVGKGTVKSAMVKQKAFSFEYSVSMTTRKPRPGEVNGKDYYFVSEDRFQEAIKGNELLEYNEYVGNHYGTPLAPVQKMLNEGKDVLLEIDVNGAKQVRKLMPDGVFIFLTPPDLHELKHRIVNRGTDSDKVIAMRMKQARKEILMMEDYDYAVVNDTVANAVDHIKSIVEAEHVRVPRVINDYRNMVKED.

The region spanning 5 to 184 (GLLLVLSGPS…AVDHIKSIVE (180 aa)) is the Guanylate kinase-like domain. Residue 12 to 19 (GPSGVGKG) coordinates ATP.

It belongs to the guanylate kinase family.

The protein resides in the cytoplasm. It carries out the reaction GMP + ATP = GDP + ADP. Functionally, essential for recycling GMP and indirectly, cGMP. This is Guanylate kinase from Lactobacillus johnsonii (strain CNCM I-12250 / La1 / NCC 533).